The chain runs to 534 residues: MRLLTTVAALRCYLNKRRWESRLTASEEQILDSMTSWYQTAIGLVPTMGSLHQGHLSLIERARHENSTVIVSIFINPLQFGPNEDYGRYPRTLEQDRQLCEQGGVDAIFAPSPEELGIPQKNIQESQVTQVIPPSVMISGLCGHSRLGHFQGVATIVTKLLNLVQPDRAYFGQKDGQQLAVIKRLVADLDLPVEIVACPTVREASGLACSSRNQYLTAQEKQQAAVLYRGLLQAEAAFKAGVRYSSRLREVVRQELAKVSSVLVEYIELVEPTTLMPLDKIQEEGMLAIAARLGSTRLIDNTILRDRQPIIAIDGPAGAGKSTVARQVATKLGLVYLDTGAMYRAVTWLVLQQGIAIDDDCAIAELASKCKIELTPSQDLQSPVRVWINDTDVTQNIRTIEVTSQVSAIAAQAAVRQALVKQQQRWGKRGGLVAEGRDIGTHVFPDAEVKIFLTASVGERARRRQQDFQKQGQPEVSLEQLEKDIAERDWKDSTRKVSPLQKAADAVELQTDGLSISDVASQIVDYYQQRLSQW.

The pantoate--beta-alanine ligase stretch occupies residues Met1–Thr302. Residue Met48–His55 coordinates ATP. Catalysis depends on His55, which acts as the Proton donor. Residue Gln79 participates in (R)-pantoate binding. Gln79 serves as a coordination point for beta-alanine. Gly172–Asp175 provides a ligand contact to ATP. Residue Gln178 participates in (R)-pantoate binding. ATP-binding positions include Val201 and Cys209–Arg212. The segment at Ile303 to Trp534 is cytidylate kinase.

This sequence in the N-terminal section; belongs to the pantothenate synthetase family. It in the C-terminal section; belongs to the cytidylate kinase family. Type 1 subfamily.

The protein resides in the cytoplasm. The enzyme catalyses (R)-pantoate + beta-alanine + ATP = (R)-pantothenate + AMP + diphosphate + H(+). The catalysed reaction is CMP + ATP = CDP + ADP. It carries out the reaction dCMP + ATP = dCDP + ADP. It participates in cofactor biosynthesis; (R)-pantothenate biosynthesis; (R)-pantothenate from (R)-pantoate and beta-alanine: step 1/1. Its function is as follows. Catalyzes the condensation of pantoate with beta-alanine in an ATP-dependent reaction via a pantoyl-adenylate intermediate. In terms of biological role, catalyzes the transfer of a phosphate group from ATP to either CMP or dCMP to form CDP or dCDP and ADP, respectively. The protein is Bifunctional pantoate ligase/cytidylate kinase of Nostoc sp. (strain PCC 7120 / SAG 25.82 / UTEX 2576).